The following is a 204-amino-acid chain: Holliday junction branch migration complex subunit RuvA (204 aa).

A domain I region spans residues 1–64 (MIGRLQGILL…EDAHLLFGFA (64 aa)). Positions 65–143 (QKTDRTLFRE…GVKQSDFFVE (79 aa)) are domain II. A flexible linker region spans residues 144 to 155 (STHIPLSPSIES). Residues 156–204 (HSESSSDEAISALIALGYKPAEAEKMVKRVAKPELTSEQVIREALKAAL) are domain III.

It belongs to the RuvA family. In terms of assembly, homotetramer. Forms an RuvA(8)-RuvB(12)-Holliday junction (HJ) complex. HJ DNA is sandwiched between 2 RuvA tetramers; dsDNA enters through RuvA and exits via RuvB. An RuvB hexamer assembles on each DNA strand where it exits the tetramer. Each RuvB hexamer is contacted by two RuvA subunits (via domain III) on 2 adjacent RuvB subunits; this complex drives branch migration. In the full resolvosome a probable DNA-RuvA(4)-RuvB(12)-RuvC(2) complex forms which resolves the HJ.

It localises to the cytoplasm. Functionally, the RuvA-RuvB-RuvC complex processes Holliday junction (HJ) DNA during genetic recombination and DNA repair, while the RuvA-RuvB complex plays an important role in the rescue of blocked DNA replication forks via replication fork reversal (RFR). RuvA specifically binds to HJ cruciform DNA, conferring on it an open structure. The RuvB hexamer acts as an ATP-dependent pump, pulling dsDNA into and through the RuvAB complex. HJ branch migration allows RuvC to scan DNA until it finds its consensus sequence, where it cleaves and resolves the cruciform DNA. The polypeptide is Holliday junction branch migration complex subunit RuvA (Haemophilus influenzae (strain PittGG)).